Consider the following 186-residue polypeptide: Periplasmic nitrate reductase, electron transfer subunit (186 aa).

An N-terminal signal peptide occupies residues 1-20 (MKTSKLNFLTLVASTGLALA). Heme c is bound by residues H87, C102, C105, H106, H123, C144, C147, and H148.

Belongs to the NapB family. As to quaternary structure, component of the periplasmic nitrate reductase NapAB complex composed of NapA and NapB. Binds 2 heme C groups per subunit.

It is found in the periplasm. Its function is as follows. Electron transfer subunit of the periplasmic nitrate reductase complex NapAB. Transfers electrons to NapA subunit, thus allowing electron flow between membrane and periplasm. Essential for periplasmic nitrate reduction with nitrate as the terminal electron acceptor. The protein is Periplasmic nitrate reductase, electron transfer subunit of Wolinella succinogenes (strain ATCC 29543 / DSM 1740 / CCUG 13145 / JCM 31913 / LMG 7466 / NCTC 11488 / FDC 602W) (Vibrio succinogenes).